A 224-amino-acid polypeptide reads, in one-letter code: Uracil phosphoribosyltransferase (224 aa).

Position 38–42 (38–42) interacts with GTP; it reads KGLVK. Residues R87, R112, and 140 to 148 contribute to the 5-phospho-alpha-D-ribose 1-diphosphate site; that span reads DPMIATGST. Residues I204 and 209–211 each bind uracil; that span reads GDA. D210 is a binding site for 5-phospho-alpha-D-ribose 1-diphosphate.

Belongs to the UPRTase family. The cofactor is Mg(2+).

It catalyses the reaction UMP + diphosphate = 5-phospho-alpha-D-ribose 1-diphosphate + uracil. It functions in the pathway pyrimidine metabolism; UMP biosynthesis via salvage pathway; UMP from uracil: step 1/1. Its activity is regulated as follows. Allosterically activated by GTP. In terms of biological role, catalyzes the conversion of uracil and 5-phospho-alpha-D-ribose 1-diphosphate (PRPP) to UMP and diphosphate. The polypeptide is Uracil phosphoribosyltransferase (Thermococcus gammatolerans (strain DSM 15229 / JCM 11827 / EJ3)).